The following is a 682-amino-acid chain: PWWP domain-containing DNA repair factor 3A (682 aa).

Serine 105 carries the phosphoserine modification. A disordered region spans residues glutamate 121–glutamine 145. A compositionally biased stretch (low complexity) spans valine 127–leucine 140. A Phosphoserine modification is found at serine 168. Disordered regions lie at residues glycine 179–proline 318 and glycine 334–proline 369. The span at histidine 203–proline 220 shows a compositional bias: basic and acidic residues. Serine 345 and serine 346 each carry phosphoserine. Positions serine 346–serine 357 are enriched in polar residues. One can recognise a PWWP domain in the interval valine 383–alanine 444.

The protein belongs to the PWWP3A family. Interacts with TP53BP1 (via BRCT domain); the interaction is not dependent on its phosphorylation status. Binds nucleosomes. Interacts with trimethylated 'Lys-36' of histone H3 (H3K36me3) (in vitro).

The protein resides in the nucleus. Its function is as follows. Involved in the DNA damage response pathway by contributing to the maintenance of chromatin architecture. Recruited to the vicinity of DNA breaks by TP53BP1 and plays an accessory role to facilitate damage-induced chromatin changes and promoting chromatin relaxation. Required for efficient DNA repair and cell survival following DNA damage. This chain is PWWP domain-containing DNA repair factor 3A (Pwwp3a), found in Mus musculus (Mouse).